A 353-amino-acid chain; its full sequence is Terpene synthase 3 (353 aa).

Positions 118, 261, and 269 each coordinate Mg(2+). Positions 118-122 (DDLLE) match the D(D/E)XX(D/E) motif motif. The NSE motif signature appears at 261-269 (NDTFLLKKE). Residues 342–349 (WCSKTTRY) carry the WxxxxxRY motif motif.

Belongs to the terpene synthase family. The cofactor is Mg(2+).

Its function is as follows. Terpene synthase that may be involved in the production of volatile terpenoids. Does not show detectable terpene products with either farnesyl diphosphate (FPP) or geranyl diphosphate (GPP). P.polycephalum has a unique biology and these volatile terpenoids could function in internal communication of P.polycephalum, to mark the territory that have been explored, or they may be involved in chemotaxis. The chain is Terpene synthase 3 from Physarum polycephalum (Slime mold).